The sequence spans 179 residues: Large ribosomal subunit protein uL6 (179 aa).

It belongs to the universal ribosomal protein uL6 family. As to quaternary structure, part of the 50S ribosomal subunit.

In terms of biological role, this protein binds to the 23S rRNA, and is important in its secondary structure. It is located near the subunit interface in the base of the L7/L12 stalk, and near the tRNA binding site of the peptidyltransferase center. This chain is Large ribosomal subunit protein uL6, found in Spiroplasma citri.